A 369-amino-acid polypeptide reads, in one-letter code: C2 calcium-dependent domain-containing protein 4A (369 aa).

2 disordered regions span residues 151–176 and 197–240; these read PRAP…ARRP and RSRR…PFPE. Residues 153–168 are compositionally biased toward pro residues; the sequence is APGPATPAAPGCPRPP. A compositionally biased stretch (low complexity) spans 220-237; sequence SQSPARAPSTSPPSSRVP. One can recognise a C2 domain in the interval 253–369; sequence AGDALRLAAE…ELSLGALLLL (117 aa).

Belongs to the C2CD4 family. In terms of tissue distribution, specifically expressed in endothelial cells.

The protein resides in the nucleus. In terms of biological role, may be involved in inflammatory process. May regulate cell architecture and adhesion. This Homo sapiens (Human) protein is C2 calcium-dependent domain-containing protein 4A (C2CD4A).